A 729-amino-acid polypeptide reads, in one-letter code: Fatty acid oxidation complex subunit alpha (729 aa).

An enoyl-CoA hydratase/isomerase region spans residues 1 to 189; the sequence is MLYQSETLQL…KIGLVDAVVD (189 aa). Asp-296 serves as a coordination point for substrate. The segment at 311–729 is 3-hydroxyacyl-CoA dehydrogenase; the sequence is AAPKLAAVLG…LLDVSTNQPA (419 aa). Residues Met-324, Asp-343, 400–402, Lys-407, and Ser-429 contribute to the NAD(+) site; that span reads VVE. The active-site For 3-hydroxyacyl-CoA dehydrogenase activity is His-450. Position 453 (Asn-453) interacts with NAD(+). Positions 500 and 660 each coordinate substrate.

This sequence in the N-terminal section; belongs to the enoyl-CoA hydratase/isomerase family. In the C-terminal section; belongs to the 3-hydroxyacyl-CoA dehydrogenase family. In terms of assembly, heterotetramer of two alpha chains (FadB) and two beta chains (FadA).

The enzyme catalyses a (3S)-3-hydroxyacyl-CoA + NAD(+) = a 3-oxoacyl-CoA + NADH + H(+). The catalysed reaction is a (3S)-3-hydroxyacyl-CoA = a (2E)-enoyl-CoA + H2O. It catalyses the reaction a 4-saturated-(3S)-3-hydroxyacyl-CoA = a (3E)-enoyl-CoA + H2O. It carries out the reaction (3S)-3-hydroxybutanoyl-CoA = (3R)-3-hydroxybutanoyl-CoA. The enzyme catalyses a (3Z)-enoyl-CoA = a 4-saturated (2E)-enoyl-CoA. The catalysed reaction is a (3E)-enoyl-CoA = a 4-saturated (2E)-enoyl-CoA. It functions in the pathway lipid metabolism; fatty acid beta-oxidation. Its function is as follows. Involved in the aerobic and anaerobic degradation of long-chain fatty acids via beta-oxidation cycle. Catalyzes the formation of 3-oxoacyl-CoA from enoyl-CoA via L-3-hydroxyacyl-CoA. It can also use D-3-hydroxyacyl-CoA and cis-3-enoyl-CoA as substrate. This is Fatty acid oxidation complex subunit alpha from Yersinia pseudotuberculosis serotype O:1b (strain IP 31758).